Here is a 224-residue protein sequence, read N- to C-terminus: Imidazoleglycerol-phosphate dehydratase (224 aa).

This sequence belongs to the imidazoleglycerol-phosphate dehydratase family.

It carries out the reaction D-erythro-1-(imidazol-4-yl)glycerol 3-phosphate = 3-(imidazol-4-yl)-2-oxopropyl phosphate + H2O. The protein operates within amino-acid biosynthesis; L-histidine biosynthesis; L-histidine from 5-phospho-alpha-D-ribose 1-diphosphate: step 6/9. The polypeptide is Imidazoleglycerol-phosphate dehydratase (HIS3) (Komagataella pastoris (Yeast)).